The following is a 45-amino-acid chain: Large ribosomal subunit protein bL34 (45 aa).

Belongs to the bacterial ribosomal protein bL34 family.

The polypeptide is Large ribosomal subunit protein bL34 (Kocuria rhizophila (strain ATCC 9341 / DSM 348 / NBRC 103217 / DC2201)).